The chain runs to 318 residues: NADH-ubiquinone oxidoreductase chain 1 (318 aa).

8 consecutive transmembrane segments (helical) span residues 2 to 22 (FMVN…FLTL), 76 to 96 (TLAL…HPLI), 98 to 118 (FNLG…SILW), 140 to 160 (ISYE…SGSF), 171 to 191 (HSWL…STLA), 217 to 237 (AGSF…MNAL), 253 to 273 (ELYT…FLWI), and 294 to 314 (LPLT…TSGI).

It belongs to the complex I subunit 1 family. In terms of assembly, core subunit of respiratory chain NADH dehydrogenase (Complex I) which is composed of 45 different subunits.

Its subcellular location is the mitochondrion inner membrane. It carries out the reaction a ubiquinone + NADH + 5 H(+)(in) = a ubiquinol + NAD(+) + 4 H(+)(out). In terms of biological role, core subunit of the mitochondrial membrane respiratory chain NADH dehydrogenase (Complex I) which catalyzes electron transfer from NADH through the respiratory chain, using ubiquinone as an electron acceptor. Essential for the catalytic activity and assembly of complex I. This Ateles paniscus (Black spider monkey) protein is NADH-ubiquinone oxidoreductase chain 1 (MT-ND1).